Reading from the N-terminus, the 416-residue chain is Serine hydroxymethyltransferase (416 aa).

(6S)-5,6,7,8-tetrahydrofolate-binding positions include leucine 118 and 122–124 (GHL). Lysine 226 carries the N6-(pyridoxal phosphate)lysine modification. (6S)-5,6,7,8-tetrahydrofolate is bound by residues glutamate 242 and 350-352 (SPF).

This sequence belongs to the SHMT family. In terms of assembly, homodimer. It depends on pyridoxal 5'-phosphate as a cofactor.

It localises to the cytoplasm. It carries out the reaction (6R)-5,10-methylene-5,6,7,8-tetrahydrofolate + glycine + H2O = (6S)-5,6,7,8-tetrahydrofolate + L-serine. Its pathway is one-carbon metabolism; tetrahydrofolate interconversion. It functions in the pathway amino-acid biosynthesis; glycine biosynthesis; glycine from L-serine: step 1/1. Catalyzes the reversible interconversion of serine and glycine with tetrahydrofolate (THF) serving as the one-carbon carrier. This reaction serves as the major source of one-carbon groups required for the biosynthesis of purines, thymidylate, methionine, and other important biomolecules. Also exhibits THF-independent aldolase activity toward beta-hydroxyamino acids, producing glycine and aldehydes, via a retro-aldol mechanism. The polypeptide is Serine hydroxymethyltransferase (Helicobacter acinonychis (strain Sheeba)).